The chain runs to 214 residues: MISSLRGTVLSVSGQTLLLEVHGVGYGVSVTPRHALELRHGSEATVLTSLVVREDSLTLFGFPGPDELRAFELLCGVTGVGPKSALAVLEHLDPEAMAQAVAAEDDAAFRRVSGIGPKTAKLIVLQLAGKLFVTQPRTRSASSAASTVTADVVTALIGLGWSERVARTAVDDAAAAAAEQGLPADMPRLLRVALGMLGPQQPAGAPAAAQAADR.

A domain I region spans residues 1 to 63; sequence MISSLRGTVL…EDSLTLFGFP (63 aa). Residues 64-139 are domain II; that stretch reads GPDELRAFEL…KLFVTQPRTR (76 aa). The interval 139-143 is flexible linker; that stretch reads RSASS. A domain III region spans residues 144-214; sequence AASTVTADVV…APAAAQAADR (71 aa).

It belongs to the RuvA family. In terms of assembly, homotetramer. Forms an RuvA(8)-RuvB(12)-Holliday junction (HJ) complex. HJ DNA is sandwiched between 2 RuvA tetramers; dsDNA enters through RuvA and exits via RuvB. An RuvB hexamer assembles on each DNA strand where it exits the tetramer. Each RuvB hexamer is contacted by two RuvA subunits (via domain III) on 2 adjacent RuvB subunits; this complex drives branch migration. In the full resolvosome a probable DNA-RuvA(4)-RuvB(12)-RuvC(2) complex forms which resolves the HJ.

The protein resides in the cytoplasm. The RuvA-RuvB-RuvC complex processes Holliday junction (HJ) DNA during genetic recombination and DNA repair, while the RuvA-RuvB complex plays an important role in the rescue of blocked DNA replication forks via replication fork reversal (RFR). RuvA specifically binds to HJ cruciform DNA, conferring on it an open structure. The RuvB hexamer acts as an ATP-dependent pump, pulling dsDNA into and through the RuvAB complex. HJ branch migration allows RuvC to scan DNA until it finds its consensus sequence, where it cleaves and resolves the cruciform DNA. This is Holliday junction branch migration complex subunit RuvA from Clavibacter sepedonicus (Clavibacter michiganensis subsp. sepedonicus).